A 187-amino-acid polypeptide reads, in one-letter code: Aspartic protease inhibitor 9 (187 aa).

An N-linked (GlcNAc...) asparagine glycan is attached at asparagine 19. Disulfide bonds link cysteine 48-cysteine 93 and cysteine 142-cysteine 158.

Belongs to the protease inhibitor I3 (leguminous Kunitz-type inhibitor) family. In terms of processing, glycosylated. Tubers.

It is found in the vacuole. In terms of biological role, inhibitor of cathepsin D (aspartic protease) and trypsin (serine protease). May protect the plant by inhibiting proteases of invading organisms. This is Aspartic protease inhibitor 9 from Solanum tuberosum (Potato).